The following is a 536-amino-acid chain: Membrane protein insertase YidC (536 aa).

A run of 5 helical transmembrane segments spans residues 7-27, 338-358, 419-439, 453-473, and 494-514; these read FFIF…QSQS, LLST…LITF, LPVF…IGSV, LSDQ…MFFI, and PFIF…YYIV.

This sequence belongs to the OXA1/ALB3/YidC family. Type 1 subfamily. In terms of assembly, interacts with the Sec translocase complex via SecD. Specifically interacts with transmembrane segments of nascent integral membrane proteins during membrane integration.

It is found in the cell membrane. Its function is as follows. Required for the insertion and/or proper folding and/or complex formation of integral membrane proteins into the membrane. Involved in integration of membrane proteins that insert both dependently and independently of the Sec translocase complex, as well as at least some lipoproteins. Aids folding of multispanning membrane proteins. This is Membrane protein insertase YidC from Buchnera aphidicola subsp. Schizaphis graminum (strain Sg).